The sequence spans 875 residues: Acetyl-coenzyme A carboxylase carboxyl transferase subunit alpha, chloroplastic (875 aa).

Residues 1 to 50 (MASSSATLVGSTASDLLRSSTTGFTGVPLRTLGRAGLVLKRRDLTVSVTA) constitute a chloroplast transit peptide. Residues 128 to 380 (EAKYQKALVE…KIAINEAMDE (253 aa)) enclose the CoA carboxyltransferase C-terminal domain. The stretch at 664-705 (LLLDKNKAATRKQELKKKSDEHKEAARLEQELKKKFDEVMDT) forms a coiled coil. The interval 845–875 (KEKYENLTRPAGDTLTDDKLREKVGVNRNFS) is disordered. The span at 860–869 (TDDKLREKVG) shows a compositional bias: basic and acidic residues.

This sequence belongs to the AccA family. As to quaternary structure, acetyl-CoA carboxylase is a heterohexamer composed of biotin carboxyl carrier protein, biotin carboxylase and two subunits each of ACCase subunit alpha and ACCase plastid-coded subunit beta (accD).

The protein resides in the plastid. It is found in the chloroplast inner membrane. The catalysed reaction is N(6)-carboxybiotinyl-L-lysyl-[protein] + acetyl-CoA = N(6)-biotinyl-L-lysyl-[protein] + malonyl-CoA. Its pathway is lipid metabolism; malonyl-CoA biosynthesis; malonyl-CoA from acetyl-CoA: step 1/1. Activated by reductants such as dithiothreitol (DTT), and by thioredoxin in vivo, following exposure to light. Component of the acetyl coenzyme A carboxylase (ACC) complex. First, biotin carboxylase catalyzes the carboxylation of biotin on its carrier protein (BCCP) and then the CO(2) group is transferred by the carboxyltransferase to acetyl-CoA to form malonyl-CoA. This Pisum sativum (Garden pea) protein is Acetyl-coenzyme A carboxylase carboxyl transferase subunit alpha, chloroplastic (ACCA).